Here is a 98-residue protein sequence, read N- to C-terminus: Large ribosomal subunit protein uL23 (98 aa).

Belongs to the universal ribosomal protein uL23 family. As to quaternary structure, part of the 50S ribosomal subunit. Contacts protein L29, and trigger factor when it is bound to the ribosome.

One of the early assembly proteins it binds 23S rRNA. One of the proteins that surrounds the polypeptide exit tunnel on the outside of the ribosome. Forms the main docking site for trigger factor binding to the ribosome. The chain is Large ribosomal subunit protein uL23 from Methylobacterium radiotolerans (strain ATCC 27329 / DSM 1819 / JCM 2831 / NBRC 15690 / NCIMB 10815 / 0-1).